Reading from the N-terminus, the 752-residue chain is Phosphoribosylformylglycinamidine synthase subunit PurL (752 aa).

The active site involves histidine 58. Residues tyrosine 61 and lysine 103 each contribute to the ATP site. Glutamate 105 serves as a coordination point for Mg(2+). Residues 106–109 and arginine 128 contribute to the substrate site; that span reads SHNH. Residue histidine 107 is the Proton acceptor of the active site. Aspartate 129 contacts Mg(2+). Glutamine 253 lines the substrate pocket. A Mg(2+)-binding site is contributed by aspartate 281. 325–327 contacts substrate; the sequence is ESQ. The ATP site is built by aspartate 513 and glycine 550. Residue asparagine 551 participates in Mg(2+) binding. Substrate is bound at residue serine 553.

It belongs to the FGAMS family. Monomer. Part of the FGAM synthase complex composed of 1 PurL, 1 PurQ and 2 PurS subunits.

The protein localises to the cytoplasm. The catalysed reaction is N(2)-formyl-N(1)-(5-phospho-beta-D-ribosyl)glycinamide + L-glutamine + ATP + H2O = 2-formamido-N(1)-(5-O-phospho-beta-D-ribosyl)acetamidine + L-glutamate + ADP + phosphate + H(+). The protein operates within purine metabolism; IMP biosynthesis via de novo pathway; 5-amino-1-(5-phospho-D-ribosyl)imidazole from N(2)-formyl-N(1)-(5-phospho-D-ribosyl)glycinamide: step 1/2. Part of the phosphoribosylformylglycinamidine synthase complex involved in the purines biosynthetic pathway. Catalyzes the ATP-dependent conversion of formylglycinamide ribonucleotide (FGAR) and glutamine to yield formylglycinamidine ribonucleotide (FGAM) and glutamate. The FGAM synthase complex is composed of three subunits. PurQ produces an ammonia molecule by converting glutamine to glutamate. PurL transfers the ammonia molecule to FGAR to form FGAM in an ATP-dependent manner. PurS interacts with PurQ and PurL and is thought to assist in the transfer of the ammonia molecule from PurQ to PurL. In Streptomyces avermitilis (strain ATCC 31267 / DSM 46492 / JCM 5070 / NBRC 14893 / NCIMB 12804 / NRRL 8165 / MA-4680), this protein is Phosphoribosylformylglycinamidine synthase subunit PurL.